We begin with the raw amino-acid sequence, 375 residues long: uncharacterized protein (375 aa).

The next 7 membrane-spanning stretches (helical) occupy residues 21-41 (LLLLIPLLVGLTLIIYGIVLF), 66-86 (IIVFVVGSIILFFTLASFCVS), 160-180 (LVGVLIALNLALSLIEIPGIV), 203-223 (LVGLLSTSLVALITPWLHLLI), 234-254 (FYMVNDFLVLWIFYFFFFHLF), 289-309 (VISFLCGFIEGLGFYFGYFLI), and 338-358 (FFLMTTTAIFSIKYIFEMLFF).

It localises to the cell membrane. This is an uncharacterized protein from Mycoplasma genitalium (strain ATCC 33530 / DSM 19775 / NCTC 10195 / G37) (Mycoplasmoides genitalium).